The primary structure comprises 453 residues: UDP-N-acetylmuramoylalanine--D-glutamate ligase (453 aa).

115 to 121 (GSNGKTT) lines the ATP pocket.

It belongs to the MurCDEF family.

Its subcellular location is the cytoplasm. The enzyme catalyses UDP-N-acetyl-alpha-D-muramoyl-L-alanine + D-glutamate + ATP = UDP-N-acetyl-alpha-D-muramoyl-L-alanyl-D-glutamate + ADP + phosphate + H(+). It participates in cell wall biogenesis; peptidoglycan biosynthesis. Functionally, cell wall formation. Catalyzes the addition of glutamate to the nucleotide precursor UDP-N-acetylmuramoyl-L-alanine (UMA). The chain is UDP-N-acetylmuramoylalanine--D-glutamate ligase from Koribacter versatilis (strain Ellin345).